A 203-amino-acid polypeptide reads, in one-letter code: dITP/XTP pyrophosphatase (203 aa).

8–13 (TANKGK) provides a ligand contact to substrate. The Mg(2+) site is built by Glu41 and Asp70. Asp70 functions as the Proton acceptor in the catalytic mechanism. Residues Ser71, 153–156 (FGYD), Lys176, and 181–182 (HR) contribute to the substrate site.

It belongs to the HAM1 NTPase family. In terms of assembly, homodimer. The cofactor is Mg(2+).

The catalysed reaction is XTP + H2O = XMP + diphosphate + H(+). The enzyme catalyses dITP + H2O = dIMP + diphosphate + H(+). It catalyses the reaction ITP + H2O = IMP + diphosphate + H(+). In terms of biological role, pyrophosphatase that catalyzes the hydrolysis of nucleoside triphosphates to their monophosphate derivatives, with a high preference for the non-canonical purine nucleotides XTP (xanthosine triphosphate), dITP (deoxyinosine triphosphate) and ITP. Seems to function as a house-cleaning enzyme that removes non-canonical purine nucleotides from the nucleotide pool, thus preventing their incorporation into DNA/RNA and avoiding chromosomal lesions. This Listeria innocua serovar 6a (strain ATCC BAA-680 / CLIP 11262) protein is dITP/XTP pyrophosphatase.